Reading from the N-terminus, the 562-residue chain is Glutamate--tRNA ligase (562 aa).

A 'HIGH' region motif is present at residues 104-114 (PNPDFYMTLGN).

Belongs to the class-I aminoacyl-tRNA synthetase family. Glutamate--tRNA ligase type 2 subfamily.

The protein resides in the cytoplasm. It catalyses the reaction tRNA(Glu) + L-glutamate + ATP = L-glutamyl-tRNA(Glu) + AMP + diphosphate. Functionally, catalyzes the attachment of glutamate to tRNA(Glu) in a two-step reaction: glutamate is first activated by ATP to form Glu-AMP and then transferred to the acceptor end of tRNA(Glu). In Ignicoccus hospitalis (strain KIN4/I / DSM 18386 / JCM 14125), this protein is Glutamate--tRNA ligase.